A 181-amino-acid polypeptide reads, in one-letter code: 3-hydroxyanthranilate 3,4-dioxygenase (181 aa).

Arg46 contributes to the O2 binding site. Fe cation-binding residues include His50, Glu56, and His95. Residue Glu56 coordinates substrate. The substrate site is built by Arg99 and Glu109.

Belongs to the 3-HAO family. Requires Fe(2+) as cofactor.

Its subcellular location is the cytoplasm. It catalyses the reaction 3-hydroxyanthranilate + O2 = (2Z,4Z)-2-amino-3-carboxymuconate 6-semialdehyde. It participates in cofactor biosynthesis; NAD(+) biosynthesis; quinolinate from L-kynurenine: step 3/3. Functionally, catalyzes the oxidative ring opening of 3-hydroxyanthranilate to 2-amino-3-carboxymuconate semialdehyde, which spontaneously cyclizes to quinolinate. In Mycosarcoma maydis (Corn smut fungus), this protein is 3-hydroxyanthranilate 3,4-dioxygenase.